Consider the following 452-residue polypeptide: Keratin, type II cytoskeletal 80 (452 aa).

The interval 1–82 is head; the sequence is MACRSCVVGF…DPAVQQLKNQ (82 aa). Position 45 is a phosphoserine (Ser-45). Residues 82–118 are coil 1A; it reads QEKEEMKALNDKFASLIGKVQALEQRNQLLETRWSFL. Positions 83-394 constitute an IF rod domain; that stretch reads EKEEMKALND…KLVEGEEGRM (312 aa). The segment at 119 to 135 is linker 1; sequence QGQDSAIFDLGHLYEEY. The tract at residues 136-227 is coil 1B; that stretch reads QGRLQEELRK…TIYEQELKDL (92 aa). The tract at residues 228–251 is linker 12; the sequence is AAQVKDVSVTVGMDSRCHIDLSGI. Residues 252 to 390 are coil 2; it reads VEEVKAQYDA…ATYRKLVEGE (139 aa). A tail region spans residues 391-452; it reads EGRMDSPSAT…YFSQESEVSE (62 aa). Position 396 is a phosphoserine (Ser-396). The disordered stretch occupies residues 412 to 434; it reads AASRSGLSKAPSRKKKGSKGPVI.

This sequence belongs to the intermediate filament family. As to quaternary structure, heterotetramer of two type I and two type II keratins. In terms of tissue distribution, weakly expressed in tongue, but not skin or in any other tissues or organs examined.

The polypeptide is Keratin, type II cytoskeletal 80 (KRT80) (Homo sapiens (Human)).